A 532-amino-acid chain; its full sequence is RNA-directed RNA polymerase beta chain (532 aa).

The RdRp catalytic domain maps to E245 to G375.

In terms of assembly, part of the viral RNA-dependent RNA polymerase complex, the other subunits are probably the host ribosomal protein S1, EF-Tu and EF-Ts.

It catalyses the reaction RNA(n) + a ribonucleoside 5'-triphosphate = RNA(n+1) + diphosphate. Functionally, this is the catalytic subunit of the viral RNA-dependent RNA polymerase complex. This complex is involved in viral RNA replication that produces (+)-stranded genomes via a complementary, (-)-stranded intermediate. The polypeptide is RNA-directed RNA polymerase beta chain (Escherichia coli (Bacteriophage GA)).